A 160-amino-acid polypeptide reads, in one-letter code: Phosphopantetheine adenylyltransferase (160 aa).

A substrate-binding site is contributed by S9. ATP contacts are provided by residues S9–F10 and H17. Substrate-binding residues include K41, T73, and R87. ATP contacts are provided by residues G88–R90, E98, and Y123–S129.

It belongs to the bacterial CoaD family. As to quaternary structure, homohexamer. Mg(2+) is required as a cofactor.

It localises to the cytoplasm. The enzyme catalyses (R)-4'-phosphopantetheine + ATP + H(+) = 3'-dephospho-CoA + diphosphate. Its pathway is cofactor biosynthesis; coenzyme A biosynthesis; CoA from (R)-pantothenate: step 4/5. Reversibly transfers an adenylyl group from ATP to 4'-phosphopantetheine, yielding dephospho-CoA (dPCoA) and pyrophosphate. The protein is Phosphopantetheine adenylyltransferase of Roseiflexus castenholzii (strain DSM 13941 / HLO8).